The sequence spans 493 residues: Cysteine--tRNA ligase (493 aa).

Position 31 (C31) interacts with Zn(2+). Positions 33 to 43 match the 'HIGH' region motif; sequence PTVYGDAHLGH. C226, H251, and E255 together coordinate Zn(2+). A 'KMSKS' region motif is present at residues 283-287; that stretch reads KMGKS. K286 contacts ATP.

Belongs to the class-I aminoacyl-tRNA synthetase family. Monomer. Zn(2+) serves as cofactor.

The protein localises to the cytoplasm. The enzyme catalyses tRNA(Cys) + L-cysteine + ATP = L-cysteinyl-tRNA(Cys) + AMP + diphosphate. This chain is Cysteine--tRNA ligase, found in Phocaeicola vulgatus (strain ATCC 8482 / DSM 1447 / JCM 5826 / CCUG 4940 / NBRC 14291 / NCTC 11154) (Bacteroides vulgatus).